The sequence spans 417 residues: Glutamyl-tRNA reductase (417 aa).

Substrate-binding positions include 49–52 (TCNR), serine 105, 110–112 (ETQ), and glutamine 116. Cysteine 50 serves as the catalytic Nucleophile. 185-190 (GAGEMI) is an NADP(+) binding site.

It belongs to the glutamyl-tRNA reductase family. As to quaternary structure, homodimer.

The enzyme catalyses (S)-4-amino-5-oxopentanoate + tRNA(Glu) + NADP(+) = L-glutamyl-tRNA(Glu) + NADPH + H(+). Its pathway is porphyrin-containing compound metabolism; protoporphyrin-IX biosynthesis; 5-aminolevulinate from L-glutamyl-tRNA(Glu): step 1/2. Its function is as follows. Catalyzes the NADPH-dependent reduction of glutamyl-tRNA(Glu) to glutamate 1-semialdehyde (GSA). In Chromobacterium violaceum (strain ATCC 12472 / DSM 30191 / JCM 1249 / CCUG 213 / NBRC 12614 / NCIMB 9131 / NCTC 9757 / MK), this protein is Glutamyl-tRNA reductase.